The following is a 436-amino-acid chain: Bifunctional IPC transferase and DIPP synthase (436 aa).

Residues 11–241 are mobA-like NTP transferase; it reads GVGAAVLAAG…LSEEMVLGWA (231 aa). CTP is bound by residues 17–19 and K32; that span reads LAA. The tract at residues 242-435 is CDP-alcohol phosphatidyltransferases; sequence ASGNDGPVSR…RRLLALKRGR (194 aa). The next 3 helical transmembrane spans lie at 275–295, 349–371, and 397–417; these read VSLL…AGRL, AGTR…VSYT, and LAVL…LATG.

The protein in the N-terminal section; belongs to the MobA family. In the C-terminal section; belongs to the CDP-alcohol phosphatidyltransferase class-I family.

The protein localises to the membrane. It carries out the reaction 1D-myo-inositol 3-phosphate + CTP + H(+) = CDP-1L-myo-inositol + diphosphate. The enzyme catalyses CDP-1L-myo-inositol + 1D-myo-inositol 3-phosphate = bis(1L-myo-inositol) 3,1'-phosphate 1-phosphate + CMP + H(+). Functionally, involved in biosynthesis of di-myo-inositol phosphate (DIP), a widespread organic solute in microorganisms adapted to hot environments. Catalyzes the condensation of CTP and L-myo-inositol-1-phosphate into CDP-L-myo-inositol, as well as the biosynthesis of di-myo-inositol-1,3'-phosphate-1'-phosphate (DIPP) from CDP-L-myo-inositol and L-myo-inositol-1-phosphate. The polypeptide is Bifunctional IPC transferase and DIPP synthase (Rubrobacter xylanophilus (strain DSM 9941 / JCM 11954 / NBRC 16129 / PRD-1)).